We begin with the raw amino-acid sequence, 278 residues long: Indole-3-glycerol phosphate synthase (278 aa).

Belongs to the TrpC family.

The enzyme catalyses 1-(2-carboxyphenylamino)-1-deoxy-D-ribulose 5-phosphate + H(+) = (1S,2R)-1-C-(indol-3-yl)glycerol 3-phosphate + CO2 + H2O. The protein operates within amino-acid biosynthesis; L-tryptophan biosynthesis; L-tryptophan from chorismate: step 4/5. The polypeptide is Indole-3-glycerol phosphate synthase (Pseudomonas fluorescens (strain ATCC BAA-477 / NRRL B-23932 / Pf-5)).